Consider the following 562-residue polypeptide: Glutamine--tRNA ligase (562 aa).

A 'HIGH' region motif is present at residues 35–45; that stretch reads PEPNGYLHIGH. ATP-binding positions include 36–38 and 42–48; these read EPN and HIGHAKS. Residues aspartate 68 and tyrosine 213 each contribute to the L-glutamine site. ATP is bound by residues threonine 232, 262 to 263, and 270 to 272; these read RL and LSK. The short motif at 269–273 is the 'KMSKS' region element; it reads ILSKR.

Belongs to the class-I aminoacyl-tRNA synthetase family. In terms of assembly, monomer.

It is found in the cytoplasm. It carries out the reaction tRNA(Gln) + L-glutamine + ATP = L-glutaminyl-tRNA(Gln) + AMP + diphosphate. The protein is Glutamine--tRNA ligase of Buchnera aphidicola subsp. Schizaphis graminum (strain Sg).